The primary structure comprises 621 residues: Rab proteins geranylgeranyltransferase component A 2 (621 aa).

Residues 113-171 (VQDTETLQRSSPLEASATPADSLDSASLPKERQSAYSTSYEVPSRHTEESDRELSLPSA) form a disordered region. The segment covering 115-125 (DTETLQRSSPL) has biased composition (polar residues). A compositionally biased stretch (basic and acidic residues) spans 155–166 (PSRHTEESDREL).

This sequence belongs to the Rab GDI family. In terms of assembly, monomer. Heterotrimer composed of RABGGTA, RABGGTB and CHML; within this trimer, RABGGTA and RABGGTB form the catalytic component B, while CHML (component A) mediates Rab protein binding. Interacts with RAB1A, RAB7A and RAB27A, but has much lower affinity for RAB1A, RAB7A and RAB27A than CHM. Interacts with the non-phosphorylated forms of RAB3A, RAB3B, RAB3C, RAB3D, RAB5B, RAB5C, RAB8A, RAB8B, RAB10, RAB12, RAB35, and RAB43.

It localises to the cytoplasm. The protein resides in the cytosol. Substrate-binding subunit (component A) of the Rab geranylgeranyltransferase (GGTase) complex. Binds unprenylated Rab proteins and presents the substrate peptide to the catalytic component B. The component A is thought to be regenerated by transferring its prenylated Rab back to the donor membrane. Less effective than CHM in supporting prenylation of Rab3 family. The chain is Rab proteins geranylgeranyltransferase component A 2 (Chml) from Mus musculus (Mouse).